The chain runs to 51 residues: Large ribosomal subunit protein eL39 (51 aa).

Belongs to the eukaryotic ribosomal protein eL39 family.

This is Large ribosomal subunit protein eL39 from Thermococcus sibiricus (strain DSM 12597 / MM 739).